The sequence spans 199 residues: Small ribosomal subunit protein uS2 (199 aa).

It belongs to the universal ribosomal protein uS2 family.

This chain is Small ribosomal subunit protein uS2 (rps2), found in Thermoplasma volcanium (strain ATCC 51530 / DSM 4299 / JCM 9571 / NBRC 15438 / GSS1).